The following is a 213-amino-acid chain: Putative 3-methyladenine DNA glycosylase (213 aa).

A disordered region spans residues 165 to 187 (GTPVPPDQVRNGPRTGVSGDGGV).

It belongs to the DNA glycosylase MPG family.

In Streptomyces avermitilis (strain ATCC 31267 / DSM 46492 / JCM 5070 / NBRC 14893 / NCIMB 12804 / NRRL 8165 / MA-4680), this protein is Putative 3-methyladenine DNA glycosylase.